The chain runs to 546 residues: Phosphatidylinositol 4-phosphate 5-kinase type-1 alpha (546 aa).

The region spanning 66-434 is the PIPK domain; that stretch reads TSSALKGAIQ…RFQRFMCNTV (369 aa). A Glycyl lysine isopeptide (Lys-Gly) (interchain with G-Cter in ubiquitin) cross-link involves residue Lys88. Disordered stretches follow at residues 442-475 and 491-518; these read PSPT…SGEH and LGRP…PSFS. 2 stretches are compositionally biased toward low complexity: residues 450 to 462 and 509 to 518; these read SGPS…GPSG and GSPVPGPSFS.

Interacts with RAC1. Interacts with TUT1. Forms a complex with CDH1/E-cadherin, CTNNB1/beta-catenin and CTNND1 at the plasma membrane upon calcium stimulation. Found in a ternary complex with IRS1 and DGKZ in the absence of insulin stimulation. Interacts with DGKZ. Interacts with PIP4K2C; the interaction inhibits PIP5K1A kinase activity. Highest expression in brain. Also detected in skeletal muscle, testis, brain and lung.

It localises to the cell membrane. It is found in the cytoplasm. The protein resides in the nucleus. The protein localises to the nucleus speckle. Its subcellular location is the cell projection. It localises to the ruffle. It is found in the lamellipodium. It carries out the reaction a 1,2-diacyl-sn-glycero-3-phospho-(1D-myo-inositol 4-phosphate) + ATP = a 1,2-diacyl-sn-glycero-3-phospho-(1D-myo-inositol-4,5-bisphosphate) + ADP + H(+). It catalyses the reaction 1-octadecanoyl-2-(5Z,8Z,11Z,14Z)-eicosatetraenoyl-sn-glycero-3-phospho-1D-myo-inositol 4-phosphate + ATP = 1-octadecanoyl-2-(5Z,8Z,11Z,14Z)-eicosatetraenoyl-sn-glycero-3-phospho-1D-myo-inositol 4,5-bisphosphate + ADP + H(+). The catalysed reaction is 1,2-dihexadecanoyl-sn-glycero-3-phospho-(1D-myo-inositol-4-phosphate) + ATP = 1,2-dihexadecanoyl-sn-glycero-3-phospho-(1D-myo-inositol-4,5-bisphosphate) + ADP + H(+). The enzyme catalyses 1-octadecanoyl-2-(9Z)-octadecenoyl-sn-glycero-3-phospho-1D-myo-inositol 4-phosphate + ATP = 1-octadecanoyl-2-(9Z)-octadecenoyl-sn-glycero-3-phospho-1D-myo-inositol 4,5-bisphosphate + ADP + H(+). It carries out the reaction 1-octadecanoyl-2-(9Z)-octadecenoyl-sn-glycero-3-phospho-1D-myo-inositol + ATP = 1-octadecanoyl-2-(9Z)-octadecenoyl-sn-glycero-3-phospho-1D-myo-inositol 5-phosphate + ADP + H(+). It catalyses the reaction 1-octadecanoyl-2-(9Z,12Z)-octadecadienoyl-sn-glycero-3-phospho-1D-myo-inositol + ATP = 1-octadecanoyl-2-(9Z,12Z)-octadecadienoyl-sn-glycero-3-phospho-1D-myo-inositol 5-phosphate + ADP + H(+). The catalysed reaction is 1-octadecanoyl-2-(5Z,8Z,11Z,14Z-eicosatetraenoyl)-sn-glycero-3-phospho-(1D-myo-inositol) + ATP = 1-octadecanoyl-2-(5Z,8Z,11Z,14Z)-eicosatetraenoyl-sn-glycero-3-phospho-1D-myo-inositol 5-phosphate + ADP + H(+). The enzyme catalyses 1,2-di-(9Z,12Z)-octadecadienoyl-sn-glycero-3-phospho-1D-myo-inositol + ATP = 1,2-di(9Z,12Z)-octadecadienoyl-sn-glycero-3-phospho-1D-myo-inositol 5-phosphate + ADP + H(+). With respect to regulation, activated by phosphatidic acid. Catalyzes the phosphorylation of phosphatidylinositol 4-phosphate (PtdIns(4)P/PI4P) to form phosphatidylinositol 4,5-bisphosphate (PtdIns(4,5)P2/PIP2), a lipid second messenger that regulates several cellular processes such as signal transduction, vesicle trafficking, actin cytoskeleton dynamics, cell adhesion, and cell motility. PtdIns(4,5)P2 can directly act as a second messenger or can be utilized as a precursor to generate other second messengers: inositol 1,4,5-trisphosphate (IP3), diacylglycerol (DAG) or phosphatidylinositol-3,4,5-trisphosphate (PtdIns(3,4,5)P3/PIP3). PIP5K1A-mediated phosphorylation of PtdIns(4)P is the predominant pathway for PtdIns(4,5)P2 synthesis. Can also use phosphatidylinositol (PtdIns) as substrate in vitro. Together with PIP5K1C, is required for phagocytosis, both enzymes regulating different types of actin remodeling at sequential steps. Promotes particle ingestion by activating the WAS GTPase-binding protein that induces Arp2/3 dependent actin polymerization at the nascent phagocytic cup. Together with PIP5K1B, is required, after stimulation by G-protein coupled receptors, for the synthesis of IP3 that will induce stable platelet adhesion. Recruited to the plasma membrane by the E-cadherin/beta-catenin complex where it provides the substrate PtdIns(4,5)P2 for the production of PtdIns(3,4,5)P3, IP3 and DAG, that will mobilize internal calcium and drive keratinocyte differentiation. Positively regulates insulin-induced translocation of SLC2A4 to the cell membrane in adipocytes. Together with PIP5K1C has a role during embryogenesis. Independently of its catalytic activity, is required for membrane ruffling formation, actin organization and focal adhesion formation during directional cell migration by controlling integrin-induced translocation of the small GTPase RAC1 to the plasma membrane. Also functions in the nucleus where it acts as an activator of TUT1 adenylyltransferase activity in nuclear speckles, thereby regulating mRNA polyadenylation of a select set of mRNAs. In Mus musculus (Mouse), this protein is Phosphatidylinositol 4-phosphate 5-kinase type-1 alpha.